Reading from the N-terminus, the 76-residue chain is Beta-defensin 121 (76 aa).

A signal peptide spans 1–15 (MKLLLLLLTVTLLLA). 3 disulfides stabilise this stretch: Cys-23–Cys-50, Cys-30–Cys-44, and Cys-34–Cys-51.

The protein belongs to the beta-defensin family. In terms of tissue distribution, abundant expression in the male reproductive tract only.

The protein resides in the secreted. Its function is as follows. Has antibacterial activity. This chain is Beta-defensin 121 (DEFB121), found in Homo sapiens (Human).